A 189-amino-acid polypeptide reads, in one-letter code: MRELKILVVNNYGQFCHLIHRAVRDLDMDTKIIPNVTPIEDILAEEPDGLILSGGPEMERAGLCFDYVREIDIPILGICLGHQAIALAYGGHVHSGKKGGYAEIEIEVIEEDDILRGLGPKITVWASHADEVAILPEGFIHLARSDICEIEAMRHPTKPIYGVQWHPEVSHTKKGDELLTNFFEVCDRY.

The region spanning 5 to 189 (KILVVNNYGQ…TNFFEVCDRY (185 aa)) is the Glutamine amidotransferase type-1 domain. Cys79 serves as the catalytic Nucleophile. Residues His166 and Glu168 contribute to the active site.

In terms of assembly, heterodimer composed of a glutamine amidotransferase subunit (A) and a GMP-binding subunit (B).

It carries out the reaction XMP + L-glutamine + ATP + H2O = GMP + L-glutamate + AMP + diphosphate + 2 H(+). The protein operates within purine metabolism; GMP biosynthesis; GMP from XMP (L-Gln route): step 1/1. In terms of biological role, catalyzes the synthesis of GMP from XMP. This Methanosarcina acetivorans (strain ATCC 35395 / DSM 2834 / JCM 12185 / C2A) protein is GMP synthase [glutamine-hydrolyzing] subunit A.